Here is a 943-residue protein sequence, read N- to C-terminus: UvrABC system protein A (943 aa).

32–39 is an ATP binding site; it reads GLSGSGKS. The C4-type zinc finger occupies 251–278; sequence CPVCGFTVPELEPRLFSFNAPFGSCPTC. 2 ABC transporter domains span residues 308–589 and 609–937; these read WNPI…KKSI and GSGR…QYLK. ATP is bound at residue 641–648; the sequence is GVSGSGKS. The segment at 740 to 766 adopts a C4-type zinc-finger fold; the sequence is CEACSGDGIIKIEMHFLPDVYVPCEVC.

This sequence belongs to the ABC transporter superfamily. UvrA family. Forms a heterotetramer with UvrB during the search for lesions.

The protein resides in the cytoplasm. Functionally, the UvrABC repair system catalyzes the recognition and processing of DNA lesions. UvrA is an ATPase and a DNA-binding protein. A damage recognition complex composed of 2 UvrA and 2 UvrB subunits scans DNA for abnormalities. When the presence of a lesion has been verified by UvrB, the UvrA molecules dissociate. This chain is UvrABC system protein A, found in Streptococcus mutans serotype c (strain ATCC 700610 / UA159).